The chain runs to 338 residues: Endonuclease V (338 aa).

Mg(2+) is bound by residues Asp52 and Asp126. A disordered region spans residues 253–338 (QLGVAPAQRK…PSPAWVQSPP (86 aa)). Basic and acidic residues-rich tracts occupy residues 260 to 270 (QRKDRSQKEQR) and 287 to 323 (RPPE…HQED). The span at 328 to 338 (PPSPAWVQSPP) shows a compositional bias: pro residues.

This sequence belongs to the endonuclease V family. As to quaternary structure, monomer. Interacts with PABPC1; the interaction is RNA-dependent and stimulates ENDOV activity. Requires Mg(2+) as cofactor. As to expression, highest levels detected in liver with high levels also found in heart, kidney and testis. Expressed at low levels in brain.

The protein localises to the cytoplasm. The protein resides in the nucleus. Its subcellular location is the nucleolus. It localises to the stress granule. Functionally, endoribonuclease that specifically cleaves inosine-containing RNAs: cleaves RNA at the second phosphodiester bond 3' to inosine. Active against both single-stranded and double-stranded RNAs. Has strong preference for single-stranded RNAs (ssRNAs) toward double-stranded RNAs (dsRNAs). Cleaves mRNAs and tRNAs containing inosine. Also able to cleave structure-specific dsRNA substrates containing the specific sites 5'-IIUI-3' and 5'-UIUU-3'. Inosine is present in a number of RNAs following editing; the function of inosine-specific endoribonuclease is still unclear: it could either play a regulatory role in edited RNAs, or be involved in antiviral response by removing the hyperedited long viral dsRNA genome that has undergone A-to-I editing. Binds branched DNA structures. The polypeptide is Endonuclease V (Endov) (Mus musculus (Mouse)).